The following is a 270-amino-acid chain: Urease accessory protein UreD (270 aa).

This sequence belongs to the UreD family. In terms of assembly, ureD, UreF and UreG form a complex that acts as a GTP-hydrolysis-dependent molecular chaperone, activating the urease apoprotein by helping to assemble the nickel containing metallocenter of UreC. The UreE protein probably delivers the nickel.

It is found in the cytoplasm. Its function is as follows. Required for maturation of urease via the functional incorporation of the urease nickel metallocenter. The polypeptide is Urease accessory protein UreD (Microcystis aeruginosa (strain NIES-843 / IAM M-2473)).